A 361-amino-acid polypeptide reads, in one-letter code: Phospho-N-acetylmuramoyl-pentapeptide-transferase (361 aa).

Helical transmembrane passes span 27 to 47 (GAMV…IDHL), 72 to 92 (TPTM…LLWA), 94 to 114 (LHNP…FVGF), 133 to 153 (LRLA…IWAG), 169 to 189 (FAIN…VGAG), 200 to 220 (GLAI…AYLV), 240 to 260 (LAVL…FNAP), 264 to 284 (IFMG…IAVA), 289 to 309 (IVLA…IVQV), and 338 to 358 (QIVI…LSTL).

This sequence belongs to the glycosyltransferase 4 family. MraY subfamily. Mg(2+) serves as cofactor.

The protein localises to the cell inner membrane. It carries out the reaction UDP-N-acetyl-alpha-D-muramoyl-L-alanyl-gamma-D-glutamyl-meso-2,6-diaminopimeloyl-D-alanyl-D-alanine + di-trans,octa-cis-undecaprenyl phosphate = di-trans,octa-cis-undecaprenyl diphospho-N-acetyl-alpha-D-muramoyl-L-alanyl-D-glutamyl-meso-2,6-diaminopimeloyl-D-alanyl-D-alanine + UMP. Its pathway is cell wall biogenesis; peptidoglycan biosynthesis. Catalyzes the initial step of the lipid cycle reactions in the biosynthesis of the cell wall peptidoglycan: transfers peptidoglycan precursor phospho-MurNAc-pentapeptide from UDP-MurNAc-pentapeptide onto the lipid carrier undecaprenyl phosphate, yielding undecaprenyl-pyrophosphoryl-MurNAc-pentapeptide, known as lipid I. This is Phospho-N-acetylmuramoyl-pentapeptide-transferase from Afipia carboxidovorans (strain ATCC 49405 / DSM 1227 / KCTC 32145 / OM5) (Oligotropha carboxidovorans).